Here is a 404-residue protein sequence, read N- to C-terminus: Phosphopentomutase (404 aa).

Residues Asp-10, Asp-297, His-302, Asp-338, His-339, and His-350 each contribute to the Mn(2+) site.

It belongs to the phosphopentomutase family. The cofactor is Mn(2+).

It localises to the cytoplasm. The catalysed reaction is 2-deoxy-alpha-D-ribose 1-phosphate = 2-deoxy-D-ribose 5-phosphate. It carries out the reaction alpha-D-ribose 1-phosphate = D-ribose 5-phosphate. The protein operates within carbohydrate degradation; 2-deoxy-D-ribose 1-phosphate degradation; D-glyceraldehyde 3-phosphate and acetaldehyde from 2-deoxy-alpha-D-ribose 1-phosphate: step 1/2. In terms of biological role, isomerase that catalyzes the conversion of deoxy-ribose 1-phosphate (dRib-1-P) and ribose 1-phosphate (Rib-1-P) to deoxy-ribose 5-phosphate (dRib-5-P) and ribose 5-phosphate (Rib-5-P), respectively. The protein is Phosphopentomutase of Colwellia psychrerythraea (strain 34H / ATCC BAA-681) (Vibrio psychroerythus).